The primary structure comprises 68 residues: Beta-defensin 1 (68 aa).

The N-terminal stretch at 1-21 (MRTSYLLLFTLCLLLSEMASG) is a signal peptide. Residues 22–32 (DNFLTGLGHRS) constitute a propeptide that is removed on maturation. 3 disulfides stabilise this stretch: Cys-37-Cys-66, Cys-44-Cys-59, and Cys-49-Cys-67.

It belongs to the beta-defensin family. Monomer. Homodimer.

Its subcellular location is the secreted. It localises to the membrane. Has bactericidal activity. May act as a ligand for C-C chemokine receptor CCR6. Positively regulates the sperm motility and bactericidal activity in a CCR6-dependent manner. Binds to CCR6 and triggers Ca2+ mobilization in the sperm which is important for its motility. The chain is Beta-defensin 1 (DEFB1) from Cercopithecus erythrogaster (Red-bellied monkey).